The sequence spans 556 residues: 2-methylpropanoate--CoA ligase CCL4 (556 aa).

ATP-binding positions include 192–200 (TSGTTSSPK), 325–330 (HGYGLT), Asp-423, 435–438 (IKDR), and Lys-531. Residues 260 to 325 (DSEIIYDMIK…TESLGFAVSH (66 aa)) are SBD1. An SBD2 region spans residues 326–402 (GYGLTETAGL…LRGGSVMLGY (77 aa)).

Belongs to the ATP-dependent AMP-binding enzyme family. Mostly expressed in old leaves and in cones and glandular trichomes (lupulin glands) after flowering, and, to a lower extent, in stems, young leaves and flowers.

Its subcellular location is the cytoplasm. The protein resides in the cytosol. The enzyme catalyses 2-methylpropanoate + ATP + CoA = 2-methylpropanoyl-CoA + AMP + diphosphate. It carries out the reaction propanoate + ATP + CoA = propanoyl-CoA + AMP + diphosphate. It catalyses the reaction butanoate + ATP + CoA = butanoyl-CoA + AMP + diphosphate. The catalysed reaction is 2-methylbutanoate + ATP + CoA = 2-methylbutanoyl-CoA + AMP + diphosphate. Its pathway is secondary metabolite biosynthesis. Functionally, involved in the biosynthesis of prenylated phenolics natural products which contribute to the bitter taste of beer and display broad biological activities. Catalyzes the ligation of CoA on 2-methylpropanoate (isobutyric acid) and 2-methylbutanoate to produce 2-methylpropanoyl-CoA and 2-methylbutanoyl-CoA, respectively. Can also use propanoate and butanoate as substrates with a lower efficiency. The protein is 2-methylpropanoate--CoA ligase CCL4 of Humulus lupulus (European hop).